The chain runs to 90 residues: MSKKTFEELFTELQHKAANGDPATSRTAELVDKGVHAIGKKVVEEAAEVWMAAEYEGKDAAAEEISQLLYHVQVMMVARGISLDDVYAHL.

The protein belongs to the PRA-PH family.

The protein resides in the cytoplasm. It catalyses the reaction 1-(5-phospho-beta-D-ribosyl)-ATP + H2O = 1-(5-phospho-beta-D-ribosyl)-5'-AMP + diphosphate + H(+). Its pathway is amino-acid biosynthesis; L-histidine biosynthesis; L-histidine from 5-phospho-alpha-D-ribose 1-diphosphate: step 2/9. The chain is Phosphoribosyl-ATP pyrophosphatase (hisE) from Streptomyces coelicolor (strain ATCC BAA-471 / A3(2) / M145).